The chain runs to 304 residues: Dihydroorotate dehydrogenase B (NAD(+)), catalytic subunit (304 aa).

FMN-binding positions include serine 21 and 45–46 (KA). Substrate-binding positions include lysine 45 and 69–73 (NAIGL). Residues asparagine 99 and asparagine 127 each coordinate FMN. Asparagine 127 is a substrate binding site. Cysteine 130 functions as the Nucleophile in the catalytic mechanism. 2 residues coordinate FMN: lysine 165 and isoleucine 191. 192–193 (NT) contacts substrate. FMN contacts are provided by residues glycine 217, 243–244 (GG), and 265–266 (GT).

Belongs to the dihydroorotate dehydrogenase family. Type 1 subfamily. Heterotetramer of 2 PyrK and 2 PyrD type B subunits. FMN serves as cofactor.

It localises to the cytoplasm. It carries out the reaction (S)-dihydroorotate + NAD(+) = orotate + NADH + H(+). It functions in the pathway pyrimidine metabolism; UMP biosynthesis via de novo pathway; orotate from (S)-dihydroorotate (NAD(+) route): step 1/1. Catalyzes the conversion of dihydroorotate to orotate with NAD(+) as electron acceptor. This is Dihydroorotate dehydrogenase B (NAD(+)), catalytic subunit (pyrD) from Listeria monocytogenes serotype 4b (strain CLIP80459).